Consider the following 218-residue polypeptide: 3-isopropylmalate dehydratase small subunit (218 aa).

It belongs to the LeuD family. LeuD type 1 subfamily. As to quaternary structure, heterodimer of LeuC and LeuD.

It carries out the reaction (2R,3S)-3-isopropylmalate = (2S)-2-isopropylmalate. Its pathway is amino-acid biosynthesis; L-leucine biosynthesis; L-leucine from 3-methyl-2-oxobutanoate: step 2/4. Functionally, catalyzes the isomerization between 2-isopropylmalate and 3-isopropylmalate, via the formation of 2-isopropylmaleate. This is 3-isopropylmalate dehydratase small subunit from Alkalilimnicola ehrlichii (strain ATCC BAA-1101 / DSM 17681 / MLHE-1).